The primary structure comprises 588 residues: NADP-dependent malic enzyme 3 (588 aa).

Position 2 is an N-acetylglycine (Gly-2). Residue Tyr-136 is the Proton donor of the active site. NADP(+) is bound at residue Arg-189. Lys-207 functions as the Proton acceptor in the catalytic mechanism. The a divalent metal cation site is built by Glu-279, Asp-280, and Asp-303. Residues Asp-303, 332–348, and Asn-444 contribute to the NADP(+) site; that span reads LFLGAGEAGTGIAELIA.

The protein belongs to the malic enzymes family. As to quaternary structure, homohexamers and homooctamers. It depends on Mg(2+) as a cofactor. Mn(2+) serves as cofactor. In terms of tissue distribution, mostly expressed in flowers, and, to a lower extent, in stems. In leaves and stems, restricted to the trichomes and trichome basal cells. Also present in the stipules flanking the base of the inflorescence bract leaves and in the meristematic zone of developing lateral roots. In flowers, present in pollen and the abscission zone of developing siliques.

It is found in the cytoplasm. The enzyme catalyses (S)-malate + NADP(+) = pyruvate + CO2 + NADPH. The catalysed reaction is oxaloacetate + H(+) = pyruvate + CO2. With respect to regulation, slightly activated by succinate and aspartate. Repressed by fumarate, malate, oxaloacetate and glucose. The chain is NADP-dependent malic enzyme 3 (NADP-ME3) from Arabidopsis thaliana (Mouse-ear cress).